Reading from the N-terminus, the 492-residue chain is 2,3-bisphosphoglycerate-independent phosphoglycerate mutase (492 aa).

Residues D11 and S61 each coordinate Mn(2+). S61 functions as the Phosphoserine intermediate in the catalytic mechanism. Residues H118, 147–148, R178, R184, 248–251, and K320 contribute to the substrate site; these read RD and RNDR. The Mn(2+) site is built by D386, H390, D427, H428, and H445.

Belongs to the BPG-independent phosphoglycerate mutase family. Monomer. It depends on Mn(2+) as a cofactor.

It carries out the reaction (2R)-2-phosphoglycerate = (2R)-3-phosphoglycerate. It functions in the pathway carbohydrate degradation; glycolysis; pyruvate from D-glyceraldehyde 3-phosphate: step 3/5. Functionally, catalyzes the interconversion of 2-phosphoglycerate and 3-phosphoglycerate. This is 2,3-bisphosphoglycerate-independent phosphoglycerate mutase from Campylobacter jejuni subsp. jejuni serotype O:23/36 (strain 81-176).